Here is a 265-residue protein sequence, read N- to C-terminus: Translation initiation factor 2 subunit alpha (265 aa).

One can recognise an S1 motif domain in the interval 12-83; sequence GELIIGTVYK…KKGHVDASLK (72 aa).

It belongs to the eIF-2-alpha family. As to quaternary structure, heterotrimer composed of an alpha, a beta and a gamma chain.

Functionally, eIF-2 functions in the early steps of protein synthesis by forming a ternary complex with GTP and initiator tRNA. The protein is Translation initiation factor 2 subunit alpha of Methanobrevibacter smithii (strain ATCC 35061 / DSM 861 / OCM 144 / PS).